Here is a 514-residue protein sequence, read N- to C-terminus: MTTTKRPIALLILDGWGYRENTHMNAIFHAKTPVLDRLNAQYPHGLISGSGLDVGLPDGQMGNSEVGHINLGSGRIVYQELTRISKAISDHEFETNPALCDAVDSAINAGGAVHIMGLLSPGGVHSHEEHIEAMCRMAVARGATKVYLHAFLDGRDTPPRSAKASLSHFDDLFTTLGHGRVASIIGRYFAMDRDNRWDRVSQAYELITQGKAKFQYDNAVTALEAAYARDENDEFVSSSAITDVDGKVATLQDGDALIFMNFRADRARQITRSFIHPDFDGFERAVVPKMHFVTLTEYAGDITAPIAYPSENLVNTLGEVLQNRGRTQLRISETEKYAHVTFFFNGGKEEPFEGEDRILINSPKVATYDLQPEMSSTELTDKLVAAIESTKYDVIICNYPNGDMVGHTGNFDAAVKACEAVDTCIGRVVEALAKVGGECIITADHGNAEQMTDETTGQAHTAHTSELVPFIFVGRDATIDKGGKLSDVAPTILQLIGETIPAEMKGKPLIHIKE.

Residues Asp-14 and Ser-64 each coordinate Mn(2+). The active-site Phosphoserine intermediate is the Ser-64. Substrate is bound by residues His-125, 155–156 (RD), Arg-187, Arg-193, 263–266 (RADR), and Lys-336. Positions 403, 407, 444, 445, and 463 each coordinate Mn(2+).

The protein belongs to the BPG-independent phosphoglycerate mutase family. In terms of assembly, monomer. Mn(2+) is required as a cofactor.

The enzyme catalyses (2R)-2-phosphoglycerate = (2R)-3-phosphoglycerate. It participates in carbohydrate degradation; glycolysis; pyruvate from D-glyceraldehyde 3-phosphate: step 3/5. Its function is as follows. Catalyzes the interconversion of 2-phosphoglycerate and 3-phosphoglycerate. In Shewanella sp. (strain W3-18-1), this protein is 2,3-bisphosphoglycerate-independent phosphoglycerate mutase.